The sequence spans 402 residues: MSRVSQARNLGKYFLLIDNMLVVLGFFVVFPLISIRFVDQMGWAAVMVGIALGLRQFIQQGLGIFGGAIADRFGAKPMIVTGMLMRAAGFATMGIAHEPWLLWFSCLLSGLGGTLFDPPRSALVVKLIRPQQRGRFFSLLMMQDSAGAVIGALLGSWLLQYDFRLVCATGAVLFVLCAAFNAWLLPAWKLSTVRTPVREGMTRVMRDKRFVTYVLTLAGYYMLAVQVMLMLPIMVNDVAGAPSAVKWMYAIEACLSLTLLYPIARWSEKHFRLEHRLMAGLLIMSLSMMPVGMVSGLQQLFNLICLFYIGSIIAEPARETLSASLADARARGSYMGFSRLGLAIGGAIGYIGGGWLFDLGKSAHQPELPWMMLGIIGIFTFLALGWQFSQKRAARRLLERDA.

Over 1 to 12 (MSRVSQARNLGK) the chain is Cytoplasmic. The chain crosses the membrane as a helical span at residues 13–33 (YFLLIDNMLVVLGFFVVFPLI). The Periplasmic portion of the chain corresponds to 34 to 98 (SIRFVDQMGW…GFATMGIAHE (65 aa)). Residues 99–116 (PWLLWFSCLLSGLGGTLF) form a helical membrane-spanning segment. Residues 117–138 (DPPRSALVVKLIRPQQRGRFFS) lie on the Cytoplasmic side of the membrane. A helical transmembrane segment spans residues 139–159 (LLMMQDSAGAVIGALLGSWLL). Topologically, residues 160–164 (QYDFR) are periplasmic. Residues 165 to 185 (LVCATGAVLFVLCAAFNAWLL) traverse the membrane as a helical segment. Residues 186 to 213 (PAWKLSTVRTPVREGMTRVMRDKRFVTY) are Cytoplasmic-facing. Residues 214 to 234 (VLTLAGYYMLAVQVMLMLPIM) form a helical membrane-spanning segment. At 235–243 (VNDVAGAPS) the chain is on the periplasmic side. Residues 244–264 (AVKWMYAIEACLSLTLLYPIA) traverse the membrane as a helical segment. The Cytoplasmic segment spans residues 265–276 (RWSEKHFRLEHR). A helical membrane pass occupies residues 277 to 297 (LMAGLLIMSLSMMPVGMVSGL). Residues 298–299 (QQ) lie on the Periplasmic side of the membrane. The chain crosses the membrane as a helical span at residues 300-320 (LFNLICLFYIGSIIAEPARET). Residues 321–339 (LSASLADARARGSYMGFSR) are Cytoplasmic-facing. The helical transmembrane segment at 340–360 (LGLAIGGAIGYIGGGWLFDLG) threads the bilayer. The Periplasmic segment spans residues 361-367 (KSAHQPE). A helical membrane pass occupies residues 368–388 (LPWMMLGIIGIFTFLALGWQF). The Cytoplasmic portion of the chain corresponds to 389-402 (SQKRAARRLLERDA).

This sequence belongs to the major facilitator superfamily. DHA1 family. MdtH (TC 2.A.1.2.21) subfamily.

It is found in the cell inner membrane. Its function is as follows. Confers resistance to norfloxacin and enoxacin. In Escherichia coli O9:H4 (strain HS), this protein is Multidrug resistance protein MdtH.